Here is a 139-residue protein sequence, read N- to C-terminus: Large ribosomal subunit protein uL16 (139 aa).

The segment covering 1–20 (MLIPRRVKHRKQHHPKRRGQ) has biased composition (basic residues). Residues 1–25 (MLIPRRVKHRKQHHPKRRGQAKGGT) are disordered.

Belongs to the universal ribosomal protein uL16 family. As to quaternary structure, part of the 50S ribosomal subunit.

Functionally, binds 23S rRNA and is also seen to make contacts with the A and possibly P site tRNAs. The sequence is that of Large ribosomal subunit protein uL16 from Streptomyces avermitilis (strain ATCC 31267 / DSM 46492 / JCM 5070 / NBRC 14893 / NCIMB 12804 / NRRL 8165 / MA-4680).